A 212-amino-acid polypeptide reads, in one-letter code: Pyridoxine/pyridoxamine 5'-phosphate oxidase (212 aa).

Substrate contacts are provided by residues 8–11 (RREY) and K66. Residues 61-66 (RIVLLK), 76-77 (FT), R82, K83, and Q105 contribute to the FMN site. Residues Y123, R127, and S131 each coordinate substrate. Residues 140 to 141 (QS) and W185 contribute to the FMN site. A substrate-binding site is contributed by 191-193 (RLH). Residue R195 coordinates FMN.

It belongs to the pyridoxamine 5'-phosphate oxidase family. As to quaternary structure, homodimer. FMN serves as cofactor.

The catalysed reaction is pyridoxamine 5'-phosphate + O2 + H2O = pyridoxal 5'-phosphate + H2O2 + NH4(+). The enzyme catalyses pyridoxine 5'-phosphate + O2 = pyridoxal 5'-phosphate + H2O2. It participates in cofactor metabolism; pyridoxal 5'-phosphate salvage; pyridoxal 5'-phosphate from pyridoxamine 5'-phosphate: step 1/1. It functions in the pathway cofactor metabolism; pyridoxal 5'-phosphate salvage; pyridoxal 5'-phosphate from pyridoxine 5'-phosphate: step 1/1. Functionally, catalyzes the oxidation of either pyridoxine 5'-phosphate (PNP) or pyridoxamine 5'-phosphate (PMP) into pyridoxal 5'-phosphate (PLP). The protein is Pyridoxine/pyridoxamine 5'-phosphate oxidase of Shewanella sp. (strain MR-7).